A 489-amino-acid chain; its full sequence is MAESILDRTINRFWYNLGEDCLSESQFDLMIRLMEESLDGDQIIDLTSLPSDNLQVEQVMTTTEDSISEEESEFLLAIGETSEEESDSGEEPEFEQVRMDRTGGTEIPKEEDGEGPSRYNERKRKTPEDRYFPTQPKTIPGQKQTSMGMLNIDCQTNRRTLIDDWAAEIGLIVKTNREDYLDPETILLLMEHKTSGIAKELIRNTRWNRTTGDIIEQVIDAMYTMFLGLNYSDNKVAEKIDEQEKAKIRMTKLQLCDICYLEEFTCDYEKNMYKTELADFPGYINQYLSKIPIIGEKALTRFRHEANGTSIYSLGFAAKIVKEELSKICDLSKKQKKLKKFNKKCCSIGEASTEYGCKKTSTKKYHKKRYKKKYKAYKPYKKKKKFRSGKYFKPKEKKGSKQKYCPKGKKDCRCWICNIEGHYANECPNRQSSEKAHILQQAEKLGLQPIEEPYEGVQEVFILEYKEEEEETSTEESDGSSTSEDSDSD.

Residues 79–144 are disordered; sequence GETSEEESDS…QPKTIPGQKQ (66 aa). The segment covering 81-94 has biased composition (acidic residues); that stretch reads TSEEESDSGEEPEF. Residues 95–110 show a composition bias toward basic and acidic residues; the sequence is EQVRMDRTGGTEIPKE. Positions 122–125 match the Nuclear localization signal motif; the sequence is RKRK. The segment covering 135–144 has biased composition (polar residues); the sequence is QPKTIPGQKQ. The segment at 412–429 adopts a CCHC-type zinc-finger fold; it reads CRCWICNIEGHYANECPN. Residues 467-489 are disordered; sequence EEEEETSTEESDGSSTSEDSDSD.

It belongs to the caulimoviridae capsid protein family. In terms of assembly, interacts (via nuclear localization signal) with host importin alpha.

The protein localises to the virion. Its subcellular location is the host nucleus. In terms of biological role, self assembles to form an icosahedral capsid, about 50 nm in diameter, nm, composed of 420 subunits of the viral capsid protein. The capsid encapsulates the genomic dsDNA. Following virus entry into host cell, provides nuclear import of the viral genome. Virus particles do not enter the nucleus, but dock at the nuclear membrane through the interaction with host importins. The sequence is that of Capsid protein from Arabidopsis thaliana (Mouse-ear cress).